An 862-amino-acid chain; its full sequence is Short transient receptor potential channel 7 (862 aa).

The interval 1–21 (MLGSNTFKNMQRRHTTLREKG) is disordered. Topologically, residues 1–351 (MLGSNTFKNM…GLRQQSIAVK (351 aa)) are cytoplasmic. Basic residues predominate over residues 10–21 (MQRRHTTLREKG). Position 15 is a phosphothreonine; by PKG/PRKG1 (T15). ANK repeat units follow at residues 42–71 (PEEERFLDSAEYGNIPVVRKMLEESKTLNF), 77–106 (MGQNALQLAVGNEHLEVTELLLKKENLARV), 108–134 (DALLLAISKGYVRIVEAILSHPAFAQG), and 163–192 (HDITPIILAAHCQEYEIVHILLLKGARIER). The chain crosses the membrane as a helical span at residues 352–372 (FLAVFGVSIGLPFLAIAYWIA). The Extracellular segment spans residues 373-383 (PCSKLGQTLRS). Residues 384 to 404 (PFMKFVAHAVSFTIFLGLLVV) traverse the membrane as a helical segment. At 405-465 (NASDRFEGVK…KEIWEEGPRE (61 aa)) the chain is on the cytoplasmic side. Residues 466–486 (YVLHLWNLLDFGMLSIFVASF) traverse the membrane as a helical segment. The Extracellular segment spans residues 487–537 (TARFMAFLKASEAQLYVDQYVQDVTLHNVSLPPEVAYFTYARDKWWPSDPQ). An N-linked (GlcNAc...) asparagine glycan is attached at N514. Residues 538 to 558 (IISEGLYAIAVVLSFSRIAYI) form a helical membrane-spanning segment. The Cytoplasmic portion of the chain corresponds to 559–581 (LPANESFGPLQISLGRTVKDIFK). The helical transmembrane segment at 582–602 (FMVIFIMVFVAFMIGMFNLYS) threads the bilayer. Over 603–651 (YYRGAKYNPAFTTVEESFKTLFWSIFGLSEVISVVLKYDHKFIENIGYV) the chain is Extracellular. Residues 652–672 (LYGVYNVTMVVVLLNMLIAMI) traverse the membrane as a helical segment. The Cytoplasmic portion of the chain corresponds to 673-862 (NNSYQEIEED…HLRVNQGKDI (190 aa)).

Belongs to the transient receptor (TC 1.A.4) family. STrpC subfamily. TRPC7 sub-subfamily. Interacts with MX1 and RNF24. Interacts (via ANK-repeat domains) with PRKG1. Phosphorylation by PRKG1 at Thr-15 negatively regulates TRPC7 activity.

The protein resides in the cell membrane. Its subcellular location is the nucleus envelope. It carries out the reaction Ca(2+)(in) = Ca(2+)(out). Forms a receptor-activated non-selective calcium permeant cation channel. Probably is operated by a phosphatidylinositol second messenger system activated by receptor tyrosine kinases or G-protein coupled receptors. Activated by diacylglycerol (DAG). May also be activated by intracellular calcium store depletion. The polypeptide is Short transient receptor potential channel 7 (Trpc7) (Mus musculus (Mouse)).